Reading from the N-terminus, the 167-residue chain is Translationally-controlled tumor protein homolog (167 aa).

The TCTP domain maps to 1 to 167 (MIIFKDVISN…WKHGIKEEKI (167 aa)).

It belongs to the TCTP family.

It is found in the cytoplasm. The protein resides in the cytoskeleton. Functionally, involved in protein synthesis. Involved in microtubule stabilization. In Yarrowia lipolytica (strain CLIB 122 / E 150) (Yeast), this protein is Translationally-controlled tumor protein homolog.